The following is a 113-amino-acid chain: 2Fe-2S ferredoxin (113 aa).

One can recognise a 2Fe-2S ferredoxin-type domain in the interval 2–104; the sequence is PKVIFLPNED…DLVVEIPKYN (103 aa). [2Fe-2S] cluster contacts are provided by Cys42, Cys48, Cys51, and Cys87.

The protein belongs to the adrenodoxin/putidaredoxin family. [2Fe-2S] cluster serves as cofactor.

In terms of biological role, ferredoxin are iron-sulfur proteins that transfer electrons in a wide variety of metabolic reactions. The chain is 2Fe-2S ferredoxin (fdx) from Haemophilus influenzae (strain ATCC 51907 / DSM 11121 / KW20 / Rd).